We begin with the raw amino-acid sequence, 446 residues long: tRNA-2-methylthio-N(6)-dimethylallyladenosine synthase (446 aa).

Positions 2–122 constitute an MTTase N-terminal domain; it reads KKAYVKSYGC…LPDLLRQSRE (121 aa). Residues Cys-11, Cys-47, Cys-85, Cys-157, Cys-161, and Cys-164 each coordinate [4Fe-4S] cluster. The region spanning 143 to 375 is the Radical SAM core domain; the sequence is RNRGVTGFLT…QQLLDQQRHA (233 aa). The TRAM domain maps to 378–440; the sequence is AAAVGTVAEI…SNSLFGEVLE (63 aa).

Belongs to the methylthiotransferase family. MiaB subfamily. In terms of assembly, monomer. Requires [4Fe-4S] cluster as cofactor.

It is found in the cytoplasm. It catalyses the reaction N(6)-dimethylallyladenosine(37) in tRNA + (sulfur carrier)-SH + AH2 + 2 S-adenosyl-L-methionine = 2-methylsulfanyl-N(6)-dimethylallyladenosine(37) in tRNA + (sulfur carrier)-H + 5'-deoxyadenosine + L-methionine + A + S-adenosyl-L-homocysteine + 2 H(+). Its function is as follows. Catalyzes the methylthiolation of N6-(dimethylallyl)adenosine (i(6)A), leading to the formation of 2-methylthio-N6-(dimethylallyl)adenosine (ms(2)i(6)A) at position 37 in tRNAs that read codons beginning with uridine. This is tRNA-2-methylthio-N(6)-dimethylallyladenosine synthase from Methylorubrum populi (strain ATCC BAA-705 / NCIMB 13946 / BJ001) (Methylobacterium populi).